Here is a 181-residue protein sequence, read N- to C-terminus: GMP synthase [glutamine-hydrolyzing] subunit A (181 aa).

A Glutamine amidotransferase type-1 domain is found at 2–181 (KILVVNNYGQ…FDNFLEICRR (180 aa)). Residue cysteine 72 is the Nucleophile of the active site. Active-site residues include histidine 159 and glutamate 161.

Heterodimer composed of a glutamine amidotransferase subunit (A) and a GMP-binding subunit (B).

It carries out the reaction XMP + L-glutamine + ATP + H2O = GMP + L-glutamate + AMP + diphosphate + 2 H(+). It functions in the pathway purine metabolism; GMP biosynthesis; GMP from XMP (L-Gln route): step 1/1. Functionally, catalyzes the synthesis of GMP from XMP. This Methanothrix thermoacetophila (strain DSM 6194 / JCM 14653 / NBRC 101360 / PT) (Methanosaeta thermophila) protein is GMP synthase [glutamine-hydrolyzing] subunit A.